Here is a 396-residue protein sequence, read N- to C-terminus: 1-deoxy-D-xylulose 5-phosphate reductoisomerase (396 aa).

Positions 15, 16, 17, 18, 41, and 130 each coordinate NADPH. A 1-deoxy-D-xylulose 5-phosphate-binding site is contributed by K131. E132 is a binding site for NADPH. D155 contacts Mn(2+). Positions 156, 157, 181, and 204 each coordinate 1-deoxy-D-xylulose 5-phosphate. E157 is a Mn(2+) binding site. NADPH is bound at residue G210. 1-deoxy-D-xylulose 5-phosphate-binding residues include S217, N222, K223, and E226. E226 lines the Mn(2+) pocket.

Belongs to the DXR family. Mg(2+) is required as a cofactor. Mn(2+) serves as cofactor.

The enzyme catalyses 2-C-methyl-D-erythritol 4-phosphate + NADP(+) = 1-deoxy-D-xylulose 5-phosphate + NADPH + H(+). Its pathway is isoprenoid biosynthesis; isopentenyl diphosphate biosynthesis via DXP pathway; isopentenyl diphosphate from 1-deoxy-D-xylulose 5-phosphate: step 1/6. Functionally, catalyzes the NADPH-dependent rearrangement and reduction of 1-deoxy-D-xylulose-5-phosphate (DXP) to 2-C-methyl-D-erythritol 4-phosphate (MEP). The protein is 1-deoxy-D-xylulose 5-phosphate reductoisomerase of Bifidobacterium longum subsp. infantis (strain ATCC 15697 / DSM 20088 / JCM 1222 / NCTC 11817 / S12).